A 169-amino-acid chain; its full sequence is Ureidoglycolate lyase (169 aa).

It belongs to the ureidoglycolate lyase family. Homodimer. The cofactor is Ni(2+).

The catalysed reaction is (S)-ureidoglycolate = urea + glyoxylate. Its pathway is nitrogen metabolism; (S)-allantoin degradation. Its function is as follows. Catalyzes the catabolism of the allantoin degradation intermediate (S)-ureidoglycolate, generating urea and glyoxylate. Involved in the utilization of allantoin as nitrogen source. The sequence is that of Ureidoglycolate lyase from Brucella anthropi (strain ATCC 49188 / DSM 6882 / CCUG 24695 / JCM 21032 / LMG 3331 / NBRC 15819 / NCTC 12168 / Alc 37) (Ochrobactrum anthropi).